Consider the following 120-residue polypeptide: Large ribosomal subunit protein bL20 (120 aa).

Belongs to the bacterial ribosomal protein bL20 family.

Its function is as follows. Binds directly to 23S ribosomal RNA and is necessary for the in vitro assembly process of the 50S ribosomal subunit. It is not involved in the protein synthesizing functions of that subunit. This Mesoplasma florum (strain ATCC 33453 / NBRC 100688 / NCTC 11704 / L1) (Acholeplasma florum) protein is Large ribosomal subunit protein bL20.